Here is a 258-residue protein sequence, read N- to C-terminus: 5'-nucleotidase SurE (258 aa).

The a divalent metal cation site is built by aspartate 14, aspartate 15, serine 45, and asparagine 101.

This sequence belongs to the SurE nucleotidase family. The cofactor is a divalent metal cation.

It localises to the cytoplasm. It catalyses the reaction a ribonucleoside 5'-phosphate + H2O = a ribonucleoside + phosphate. In terms of biological role, nucleotidase that shows phosphatase activity on nucleoside 5'-monophosphates. This Chlorobium phaeobacteroides (strain DSM 266 / SMG 266 / 2430) protein is 5'-nucleotidase SurE.